The chain runs to 223 residues: MTAATENRTVRRNGPGTKRADWNNWSPLAFEEMDSALNIQQYIQQTIKANPADVATILTPPLDQDEGVWKYEHLRQFCIELNGLALLLQRECIPETCQQMTATEQWIFLCAAHKNPNECPAIDYTRHTLDGAATLLNSNKYFPSRVNIKEISISKLGSVARRVYRIFSHAFFHHRKLFDEFENETHLCKRFTTYVSKYNLMQQEHLIVPILPNQQQQQQTTVQ.

The segment at 1 to 23 (MTAATENRTVRRNGPGTKRADWN) is disordered. Residues C92, C97, H169, and H174 each coordinate Zn(2+).

Belongs to the MOB1/phocein family.

The protein localises to the cytoplasm. Its subcellular location is the perinuclear region. It is found in the membrane. It localises to the golgi apparatus. The protein resides in the golgi stack membrane. Its function is as follows. May play a role in membrane trafficking, specifically in membrane budding reactions. The protein is MOB-like protein phocein of Caenorhabditis elegans.